A 281-amino-acid polypeptide reads, in one-letter code: Phosphatidylglycerol--prolipoprotein diacylglyceryl transferase (281 aa).

4 helical membrane passes run 23–43, 71–91, 107–127, and 133–153; these read IGPL…LFAW, FVIW…VLFY, WDGG…MILF, and ILVW…LGVV. Residue Arg-154 participates in a 1,2-diacyl-sn-glycero-3-phospho-(1'-sn-glycerol) binding. 3 consecutive transmembrane segments (helical) span residues 189-209, 217-237, and 247-267; these read LYEA…LVWG, GFVA…VEFF, and LFGG…LLGL.

This sequence belongs to the Lgt family.

It is found in the cell inner membrane. The enzyme catalyses L-cysteinyl-[prolipoprotein] + a 1,2-diacyl-sn-glycero-3-phospho-(1'-sn-glycerol) = an S-1,2-diacyl-sn-glyceryl-L-cysteinyl-[prolipoprotein] + sn-glycerol 1-phosphate + H(+). It participates in protein modification; lipoprotein biosynthesis (diacylglyceryl transfer). Catalyzes the transfer of the diacylglyceryl group from phosphatidylglycerol to the sulfhydryl group of the N-terminal cysteine of a prolipoprotein, the first step in the formation of mature lipoproteins. The polypeptide is Phosphatidylglycerol--prolipoprotein diacylglyceryl transferase (Brucella canis (strain ATCC 23365 / NCTC 10854 / RM-666)).